The chain runs to 62 residues: Cecropin-A (62 aa).

The signal sequence occupies residues 1–20 (MNLVKILFCVFACLVFTVTA). Positions 21–24 (VPEP) are cleaved as a propeptide — removed by a dipeptidylpeptidase. Thr-60 carries the post-translational modification Threonine amide.

The protein belongs to the cecropin family.

It is found in the secreted. Has antibacterial activity. In Trichoplusia ni (Cabbage looper), this protein is Cecropin-A.